The chain runs to 260 residues: Thrombin-like enzyme 2 (260 aa).

A signal peptide spans 1–18 (MMLIRVLANLLILQLSYA). Residues 19–24 (QKSSEL) constitute a propeptide that is removed on maturation. Residues 25-251 (VIGGDECNIN…HLDWIQSIIA (227 aa)) form the Peptidase S1 domain. 6 disulfides stabilise this stretch: C31–C165, C52–C68, C102–C258, C144–C212, C176–C191, and C202–C227. H67 (charge relay system) is an active-site residue. N105 carries N-linked (GlcNAc...) asparagine glycosylation. Catalysis depends on D112, which acts as the Charge relay system. 2 N-linked (GlcNAc...) asparagine glycosylation sites follow: N156 and N172. Residue S206 is the Charge relay system of the active site. Residue N253 is glycosylated (N-linked (GlcNAc...) asparagine).

The protein belongs to the peptidase S1 family. Snake venom subfamily. Monomer. As to expression, expressed by the venom gland.

The protein resides in the secreted. Functionally, thrombin-like snake venom serine protease. This chain is Thrombin-like enzyme 2, found in Trimeresurus albolabris (White-lipped pit viper).